The primary structure comprises 78 residues: Probable two-component-system connector protein YcgZ (78 aa).

Its function is as follows. Probably a connector protein for RcsB/C regulation of biofilm formation, providing additional signal input into the two-component signaling pathway. Partially antagonizes the activities of YmgA and AriR, proteins that, via the Rcs phosphorelay, promote the synthesis of colanic acid, an exopolysaccharide and matrix component. The chain is Probable two-component-system connector protein YcgZ (ycgZ) from Escherichia coli (strain K12).